The following is a 921-amino-acid chain: Isoleucine--tRNA ligase (921 aa).

The 'HIGH' region signature appears at Pro-57 to His-67. Residue Glu-553 coordinates L-isoleucyl-5'-AMP. Residues Lys-594 to Ser-598 carry the 'KMSKS' region motif. ATP is bound at residue Lys-597.

This sequence belongs to the class-I aminoacyl-tRNA synthetase family. IleS type 1 subfamily. Monomer.

It localises to the cytoplasm. It catalyses the reaction tRNA(Ile) + L-isoleucine + ATP = L-isoleucyl-tRNA(Ile) + AMP + diphosphate. Its function is as follows. Catalyzes the attachment of isoleucine to tRNA(Ile). As IleRS can inadvertently accommodate and process structurally similar amino acids such as valine, to avoid such errors it has two additional distinct tRNA(Ile)-dependent editing activities. One activity is designated as 'pretransfer' editing and involves the hydrolysis of activated Val-AMP. The other activity is designated 'posttransfer' editing and involves deacylation of mischarged Val-tRNA(Ile). The polypeptide is Isoleucine--tRNA ligase (Bacillus subtilis (strain 168)).